A 309-amino-acid polypeptide reads, in one-letter code: Foldase protein PrsA (309 aa).

The signal sequence occupies residues 1–22 (MKTRSKLAAGFLTLMSVATLAA). A lipid anchor (N-palmitoyl cysteine) is attached at Cys-23. Residue Cys-23 is the site of S-diacylglycerol cysteine attachment. In terms of domain architecture, PpiC spans 146–241 (TPETSVQVIK…TSYYIIKVTD (96 aa)).

Belongs to the PrsA family.

The protein localises to the cell membrane. It carries out the reaction [protein]-peptidylproline (omega=180) = [protein]-peptidylproline (omega=0). In terms of biological role, plays a major role in protein secretion by helping the post-translocational extracellular folding of several secreted proteins. The protein is Foldase protein PrsA of Streptococcus agalactiae serotype III (strain NEM316).